Reading from the N-terminus, the 2218-residue chain is MEEDIACVKDLVSKYLVDNERLSRQKLAFLVQTEPRMLLMEGLKLLSLCIEVDSCNANGCEHNSEDKSVERILHDHGILTPSLCLWYPDGYKLTGNVLILLECFVRSSPANFEQKYIEDFKKLEQLKEDLKSVDINLIPLIDGRTSFYNEQIPDWVNDKLRDTLFSLLKYAQESNSLFEESEYSRLCESLFMTSGRLSGVESLNVLMDNRSNHYEEVIASCHQGINNKLTAHEVKLQIEEEYQVFRNRLRKGEIEGQFLKVDKSQLLNELNNLYADKVVAEDNIEHLIYQFKRASPILRFLYANVDEGNEKRGNQTIGECQVQCWRSFLNKVKSLRILNTRRKLLLIFDALILLASKHDLMKQKCLKGWLGSCFLRVKDRLVSLEATKRDLEKWGERGNRLRSRITQSSQCLSKNQILNSIFQKTILKATTALKDVGISVDHYKIDMEVICLNSYDLIMDFDVSGVVPTISYQRTEEETFPYVMGDVELLGTTDLERLSSLSLALVNSMKTSSTVKLRQNEFGPARYQVVRCKEAYCQEFSLGNTELQLIYQKTGECSKCYAINDNKVGEVCSFYADPKRYFPAIFSAEVLQTTISTMISWIEDCNELEGQLNNIRSLTKMILVLILAHPSKRSQKLLQNLRYFVMAYLSDYHHKDLIDKIREELITDVEFLLYRLIRTLMNLVLSEDVKSMMTNRFKFILNVSYMCHFITKETPDRLTDQIKCFEKFLEPKVRFGHVSTNPADTATEEELDDMVYNAKKFLSKDGCTTIEGPDYKRPGVSKKYLSLLTSSFNNGSLFKEREVKREIKDPLITSGSAALDLASKKSVVVNKYTDGSRILNYDFNKLTALAVSQLTEVFSRKGKYLLNKQDYEYKVQQAMSNLVLGSGQLKSDADGADLDEILLDGGASDYFDQLKETVEKIVDQYREPVKLGSGPNGDGQPSINDLDEIVSNKFYIRLIKGELSNHMVEEFDHDILPGKFYEEFCNAVYENSRLKQKYFYCGHMSQCPIGELTKAVSTRTYFNHEYFQCFKSILLIMNANTLMGRYTHYKSRNLNFKFDMGKLSDDVRISERESNSEALSKALSLTNCTTAMLKNLCFYSQESPQSYDSVGPDTGRLKFSLSYKEQVGGNRELYIGDLRTKMFTRLIEDYFEAISLQLSGSCLNNEKEFENAILSMKLNVSLAHVSYSMDHSKWGPMMCPFLFLTVLQNLIFLSKDLQADIKGRDYLSTLLMWHMHKMVEIPFNVVTAMMKSFIKAQLGLRKKTKQSITEDFFYSNFQAGVVPSHISSILDMGQGILHNTSDFYALISERFINYAISCICGGTIDAYTSSDDQISLFDQSLTELLQRDPEEFRTLIEFHYYMSDQLNKFVSPKSVIGRFVAEFKSRFFVWGDEVPLLTKFVAAALHNIKCKEPHQLAETIDTIIDQSVANGVPVHLCNLIQKRTLNPLQYARYPIDPFLLNCETDVRDWVDGNRSYRIMRQIEGLIPNACSKIRSMLRKLYNRLKTGQLHEEFTTNYLSSEHLSSLRNLCELLDVEPPSESDLEYSWLNLAAHHPLRMVLRQKIIYSGAVNLDDEKIPTIVKTIQNKLSSTFTRGAQKLLSEAINKSAFQSSIASGFVGLCRTLGSKCVRGPNKENLYIKSIQSLISDVKGIKLLTNSNGIQYWQVPLELRNGSGGESVVSYFRPLLWDYMCISLSTAIELGAWVLGEPKTVKVFDFFKHNPCDYFPLKPTASKLLEDRVGLNHIIHSLRRLYPSVFEKHILPFMSDLASTKMKWSPRIKFLDLCVALDVNCEALSLVSHIVKWKREEHYIVLSSELRLSHSRTHEPMVEERVVSTSDAVDNFMRQIYFESYVRPFVATTRTLGSFTWFPHKTSVPEGEGLHRMGPFSSFVEKVIHKGVERPMFKHDLMMGYAWIDFDIEPARFNQNQLIASGLVDPKFDSLEDFFDAVASLPPGSAKLSQTVRFRVKSQDASFKESFAIHLEYTGSMNQQAKYLVHDVTVMYSGAVSPCVLSDCWRLVLSGPTFKGKSAWYVDTEIINEFLIDTNQLGHVTPVEIVVDMERLQFTEYDFVLVGPCTEPTPLVVHRGGLWECGKKLASFTPVIQDQDLEIFVREVGDTSSDLLIGALSDMMIDRLGLRMQWSGVDIVSTLRAAAPSCEGILSAVLEAVDNWVEFKGYALCYSKSRGKVMVQSSGGKLRLKGRTCEELTRKDECIEDIE.

An endonuclease region spans residues 26 to 288; it reads KLAFLVQTEP…VAEDNIEHLI (263 aa). Positions 51, 89, and 102 each coordinate Mn(2+). The active site involves K115. Residues 1174-1370 enclose the RdRp catalytic domain; the sequence is LSMKLNVSLA…YMSDQLNKFV (197 aa). A Mg(2+)-binding site is contributed by D1332.

The protein belongs to the Bunyavirales RNA polymerase family. As to quaternary structure, homomultimer; the oligomeric structure is essential for the polymerase activity. Interacts with nucleoprotein N. Interacts with protein Z; this interaction inhibits viral transcription and replication, Z partially blocks the product exit tunnel for the releasing nascent RNA product. It depends on Mn(2+) as a cofactor. Requires Mg(2+) as cofactor.

It localises to the virion. The protein resides in the host cytoplasm. It carries out the reaction RNA(n) + a ribonucleoside 5'-triphosphate = RNA(n+1) + diphosphate. RNA-dependent RNA polymerase, which is responsible for the replication and transcription of the viral RNA genome using antigenomic RNA as an intermediate. During transcription, synthesizes subgenomic RNAs and assures their capping by a cap-snatching mechanism, which involves the endonuclease activity cleaving the host capped pre-mRNAs. These short capped RNAs are then used as primers for viral transcription. The 3'-end of subgenomic mRNAs molecules are heterogeneous and not polyadenylated. The replicase function is to direct synthesis of antigenomic and genomic RNA which are encapsidated and non capped. As a consequence of the use of the same enzyme for both transcription and replication, these mechanisms need to be well coordinated. These processes may be regulated by proteins N and Z in a dose-dependent manner. Z protein inhibits the viral polymerase L und thus the viral transcription and RNA synthesis. This is RNA-directed RNA polymerase L from Lassa virus (strain Mouse/Sierra Leone/Josiah/1976) (LASV).